Consider the following 128-residue polypeptide: Protein FAM229A (128 aa).

The disordered stretch occupies residues 1–96 (MQSSPSTLGP…VATDQNPVRP (96 aa)).

The protein belongs to the FAM229 family.

The sequence is that of Protein FAM229A (Fam229a) from Mus musculus (Mouse).